Reading from the N-terminus, the 1033-residue chain is Translation initiation factor IF-2 (1033 aa).

A disordered region spans residues 49 to 432 (AFQQGGGNGR…APSVGGVMLP (384 aa)). A compositionally biased stretch (low complexity) spans 59–113 (SAGRPAAPKKAAPRPSAPSPAQAGPSQAAPAAGDRAAAPRPSAAPKAPAAQQPAA). Composition is skewed to pro residues over residues 114–140 (PSAPAPAPSQGPRPTPGPKPAPRPAPA) and 148–164 (PAAPAAPSTPAPAPSGP). A compositionally biased stretch (low complexity) spans 171–189 (PGAPKPGGARPSGPGQDRG). The segment covering 190 to 201 (QQGGQGRPGGQR) has biased composition (gly residues). Residues 236-246 (APRPQGGPRPG) show a composition bias toward pro residues. A compositionally biased stretch (gly residues) spans 247–268 (GPGGAPGGGPRPQGPGGQGGGP). A compositionally biased stretch (low complexity) spans 305 to 314 (MMPQRPAAGP). The segment covering 318-401 (PGGGGRGPGG…GTQGAFGRPG (84 aa)) has biased composition (gly residues). The segment covering 405-414 (RRGRKSKRQR) has biased composition (basic residues). Residues 526-698 (VRPPVVTVMG…VVLTADASLD (173 aa)) enclose the tr-type G domain. The segment at 535 to 542 (GHVDHGKT) is G1. A GTP-binding site is contributed by 535-542 (GHVDHGKT). Positions 560–564 (GITQH) are G2. The G3 stretch occupies residues 585 to 588 (DTPG). GTP-binding positions include 585-589 (DTPGH) and 639-642 (NKID). Residues 639-642 (NKID) form a G4 region. Positions 675-677 (SAK) are G5.

The protein belongs to the TRAFAC class translation factor GTPase superfamily. Classic translation factor GTPase family. IF-2 subfamily.

Its subcellular location is the cytoplasm. Functionally, one of the essential components for the initiation of protein synthesis. Protects formylmethionyl-tRNA from spontaneous hydrolysis and promotes its binding to the 30S ribosomal subunits. Also involved in the hydrolysis of GTP during the formation of the 70S ribosomal complex. This chain is Translation initiation factor IF-2, found in Streptomyces coelicolor (strain ATCC BAA-471 / A3(2) / M145).